The following is a 206-amino-acid chain: MHNIKGGTKNPFLSGRKRPHFEEVEAAIRTLLLWIGENPNREGLLDTPRRVAKAYRDLFIGYGESVEEILGTVFEEVSGYNEPVIVKDISFYSHCEHHMIPIVGKAHIAYLPDEKVVGLSKIARIVDVFSRRLQTQETMTAQIADALEEYLKPCGIAVLIEAEHMCMTMRGVQKQGATTITTSFHGSYEKDQVAQTNFMMIVRRSS.

Zn(2+) is bound by residues Cys95, His98, and Cys166.

It belongs to the GTP cyclohydrolase I family. In terms of assembly, toroid-shaped homodecamer, composed of two pentamers of five dimers.

The enzyme catalyses GTP + H2O = 7,8-dihydroneopterin 3'-triphosphate + formate + H(+). It functions in the pathway cofactor biosynthesis; 7,8-dihydroneopterin triphosphate biosynthesis; 7,8-dihydroneopterin triphosphate from GTP: step 1/1. This chain is GTP cyclohydrolase 1, found in Bartonella quintana (strain Toulouse) (Rochalimaea quintana).